A 238-amino-acid chain; its full sequence is Ribonuclease PH (238 aa).

Phosphate-binding positions include Arg86 and Gly124–Arg126.

Belongs to the RNase PH family. As to quaternary structure, homohexameric ring arranged as a trimer of dimers.

The catalysed reaction is tRNA(n+1) + phosphate = tRNA(n) + a ribonucleoside 5'-diphosphate. In terms of biological role, phosphorolytic 3'-5' exoribonuclease that plays an important role in tRNA 3'-end maturation. Removes nucleotide residues following the 3'-CCA terminus of tRNAs; can also add nucleotides to the ends of RNA molecules by using nucleoside diphosphates as substrates, but this may not be physiologically important. Probably plays a role in initiation of 16S rRNA degradation (leading to ribosome degradation) during starvation. The polypeptide is Ribonuclease PH (Erwinia tasmaniensis (strain DSM 17950 / CFBP 7177 / CIP 109463 / NCPPB 4357 / Et1/99)).